A 128-amino-acid polypeptide reads, in one-letter code: CD59 glycoprotein (128 aa).

Positions methionine 1–serine 25 are cleaved as a signal peptide. In terms of domain architecture, UPAR/Ly6 spans leucine 26–serine 108. Cystine bridges form between cysteine 28–cysteine 51, cysteine 31–cysteine 38, cysteine 44–cysteine 64, cysteine 70–cysteine 88, and cysteine 89–cysteine 94. The N-linked (GlcNAc...) asparagine glycan is linked to asparagine 43. The GPI-anchor amidated asparagine moiety is linked to residue asparagine 102. Positions glycine 103 to proline 128 are cleaved as a propeptide — removed in mature form.

As to quaternary structure, interacts with T-cell surface antigen CD2. Post-translationally, N- and O-glycosylated.

The protein localises to the cell membrane. It is found in the secreted. Its function is as follows. Potent inhibitor of the complement membrane attack complex (MAC) action, which protects self-cells from damage during complement activation. Acts by binding to the beta-haipins of C8 (C8A and C8B) components of the assembling MAC, forming an intermolecular beta-sheet that prevents incorporation of the multiple copies of C9 required for complete formation of the osmolytic pore. The polypeptide is CD59 glycoprotein (Callithrix sp. (Marmoset)).